Reading from the N-terminus, the 221-residue chain is Small ribosomal subunit protein uS5 (221 aa).

Positions 46–109 constitute an S5 DRBM domain; that stretch reads IKDEVIDIKR…INAKLNIMEI (64 aa).

Belongs to the universal ribosomal protein uS5 family. As to quaternary structure, part of the 30S ribosomal subunit. Contacts protein S4.

In terms of biological role, with S4 and S12 plays an important role in translational accuracy. The polypeptide is Small ribosomal subunit protein uS5 (Thermoplasma volcanium (strain ATCC 51530 / DSM 4299 / JCM 9571 / NBRC 15438 / GSS1)).